The chain runs to 112 residues: Ribonuclease P protein component (112 aa).

Belongs to the RnpA family. In terms of assembly, consists of a catalytic RNA component (M1 or rnpB) and a protein subunit.

It catalyses the reaction Endonucleolytic cleavage of RNA, removing 5'-extranucleotides from tRNA precursor.. Functionally, RNaseP catalyzes the removal of the 5'-leader sequence from pre-tRNA to produce the mature 5'-terminus. It can also cleave other RNA substrates such as 4.5S RNA. The protein component plays an auxiliary but essential role in vivo by binding to the 5'-leader sequence and broadening the substrate specificity of the ribozyme. The protein is Ribonuclease P protein component of Mesomycoplasma hyopneumoniae (strain 7448) (Mycoplasma hyopneumoniae).